A 147-amino-acid chain; its full sequence is MAPELRLAVQFASGADDLPSRAQIRRWVAAALEHDAEITVRIVDADEAQALNRAYRDKDYVPNVLTFEYGEIAPALLGGDVVICAPVVEREAREQGKPLGHHYAHMTVHGVLHLQGYDHVDAADAERMETREAAILKRFHIPHPYHS.

Zn(2+) is bound by residues histidine 109, histidine 113, and histidine 119.

This sequence belongs to the endoribonuclease YbeY family. Zn(2+) serves as cofactor.

The protein resides in the cytoplasm. In terms of biological role, single strand-specific metallo-endoribonuclease involved in late-stage 70S ribosome quality control and in maturation of the 3' terminus of the 16S rRNA. This chain is Endoribonuclease YbeY, found in Thiobacillus denitrificans (strain ATCC 25259 / T1).